We begin with the raw amino-acid sequence, 397 residues long: F-box protein At5g25290 (397 aa).

The region spanning 11–56 (VTLWSEIPMDILRSVFERLSFVDLHRAKIVCSHWYSCSKQSFLRKT) is the F-box domain.

The protein is F-box protein At5g25290 of Arabidopsis thaliana (Mouse-ear cress).